Reading from the N-terminus, the 397-residue chain is MMKKRKRKVSKENVALTISSSVGEYGENSGTLPTDLMVEILSRVPAKSAARFRCVSNDWNSLLRSPYLTNLFLKRSSARPHLLITFQAEGKWSFFSSPEYLISDQNSNLVVVDNHMDVPKDYSFGVCVPVCGLMCTSNEWVLSRKRDARMMICNPSTGQFKSLPKVRSCRGNVITYIGYNPIEKQYKVLCMTIREKPFKFKAEEHQVLTLGTGKLKWRMLECSVDHYPYYHGSICINGVLFYLAMKSESKEYMTVSFHMKDENFMFIPNQDLLSTLINYKGRLGGIRHKSFGFMDGGDVGFELWILDVVNQEWIRSIHVLPPMWKDVVGETRVYFVGIIGSCEVVFSPFVKSNPFYIFHLDMKSNSITRVEIKGTGPLEGQAVYTFVNHIENVNLIM.

Positions 26–75 (GENSGTLPTDLMVEILSRVPAKSAARFRCVSNDWNSLLRSPYLTNLFLKR) constitute an F-box domain.

The sequence is that of F-box protein At3g49450 from Arabidopsis thaliana (Mouse-ear cress).